Here is a 277-residue protein sequence, read N- to C-terminus: Large ribosomal subunit protein uL2 (277 aa).

Residues 211–277 form a disordered region; it reads SRWKGVRPTV…KLIVRGRKKK (67 aa).

The protein belongs to the universal ribosomal protein uL2 family. As to quaternary structure, part of the 50S ribosomal subunit. Forms a bridge to the 30S subunit in the 70S ribosome.

Functionally, one of the primary rRNA binding proteins. Required for association of the 30S and 50S subunits to form the 70S ribosome, for tRNA binding and peptide bond formation. It has been suggested to have peptidyltransferase activity; this is somewhat controversial. Makes several contacts with the 16S rRNA in the 70S ribosome. The polypeptide is Large ribosomal subunit protein uL2 (Staphylococcus epidermidis (strain ATCC 35984 / DSM 28319 / BCRC 17069 / CCUG 31568 / BM 3577 / RP62A)).